We begin with the raw amino-acid sequence, 331 residues long: MRVAIFSSKNYDHHSIEKENEHYGHDLVFLNERLTKETAEKAKDAEAVCIFVNDEANAEVLEILAGLGIKLVALRCAGYNNVDLDAAKKLNIKVVRVPAYSPYSVAEYAVGMLLTLNRQISRGLKRVRENNFSLEGLIGLDVHDKTVGIIGVGHIGSVFAHIMTHGFGANVIAYKPHPDPELAKKVGFRFTSLDEVIETSDIISLHCPLTPENHHMINEETLARAKKGFYLVNTSRGGLVDTKAVIKSLKAKHLGGYAADVYEEEGPLFFENHADDIIEDDILERLIAFPNVVFTGHQAFLTKEALSNIAHSILQDISDAEAGKEMPDALV.

Residues 154-155 (HI), 234-236 (TSR), and D260 contribute to the NAD(+) site. Residue R236 is part of the active site. E265 is an active-site residue. Catalysis depends on H297, which acts as the Proton donor. 297–300 (HQAF) serves as a coordination point for NAD(+).

The protein belongs to the D-isomer specific 2-hydroxyacid dehydrogenase family.

This chain is 2-hydroxyacid dehydrogenase homolog (ddh), found in Zymomonas mobilis subsp. mobilis (strain ATCC 31821 / ZM4 / CP4).